The sequence spans 142 residues: Large ribosomal subunit protein uL11 (142 aa).

This sequence belongs to the universal ribosomal protein uL11 family. As to quaternary structure, part of the ribosomal stalk of the 50S ribosomal subunit. Interacts with L10 and the large rRNA to form the base of the stalk. L10 forms an elongated spine to which L12 dimers bind in a sequential fashion forming a multimeric L10(L12)X complex. In terms of processing, one or more lysine residues are methylated.

In terms of biological role, forms part of the ribosomal stalk which helps the ribosome interact with GTP-bound translation factors. The chain is Large ribosomal subunit protein uL11 from Leptospira borgpetersenii serovar Hardjo-bovis (strain JB197).